The following is a 672-amino-acid chain: Zinc finger and BTB domain-containing protein 24 (672 aa).

Residues 39 to 105 (CDITLIVEDV…MYSAVVLVDE (67 aa)) form the BTB domain. A disordered region spans residues 136–208 (HMQVKRKRGR…GKRKIKQPIR (73 aa)). Residues 140–152 (KRKRGRPKKNQDL) constitute a DNA-binding region (a.T hook 1). The span at 148–158 (KNQDLSQKENP) shows a compositional bias: basic and acidic residues. Residues 160-171 (SELQAQTSSEIQ) show a composition bias toward polar residues. A compositionally biased stretch (basic residues) spans 198–208 (EGKRKIKQPIR). The a.T hook 2 DNA-binding region spans 223–235 (PGKRGRRRKYPDT). 8 consecutive C2H2-type zinc fingers follow at residues 237 to 259 (ARCEECGKVFKSHLFLKIHQRTH), 265 to 287 (FRCSVCGKEFTQKHTLLVHQRMH), 293 to 315 (YICTVCSKALSTKHSLLEHMNLH), 321 to 343 (FTCEECGKSFSQQRQLKSHNRVH), 349 to 371 (PECAECHHKFMDAAQLKKHLRTH), 377 to 399 (FTCEICGKCFTAKSTLQTHIRIH), 405 to 427 (YVCKVCDKTFSDPSARRRHEVSH), and 433 to 455 (FSCSICKVSFARKDNLKAHIKTH). The segment at 453–492 (KTHNKENPPAQAESTDKPPQSAPEQQEQEQQQQQQTSGDK) is disordered. Positions 476 to 487 (EQQEQEQQQQQQ) are enriched in low complexity.

It belongs to the krueppel C2H2-type zinc-finger protein family.

Its subcellular location is the nucleus. Functionally, may be involved in BMP2-induced transcription. The protein is Zinc finger and BTB domain-containing protein 24 (zbtb24) of Danio rerio (Zebrafish).